The primary structure comprises 429 residues: U3 small nucleolar RNA-associated protein 18 homolog (429 aa).

4 WD repeats span residues 117–156, 295–336, 345–386, and 392–428; these read RYTRGITVVKFHKTRPVLIVADQGGNVQLFKVSREVKKDR, TDDG…NSTN, NLVT…TFKN, and GKVTHARCVEFSPNGGYMAVGNDDGRLHVFEIHHFTD.

Belongs to the WD repeat UTP18 family.

It is found in the nucleus. Its subcellular location is the nucleolus. Functionally, involved in nucleolar processing of pre-18S ribosomal RNA. The sequence is that of U3 small nucleolar RNA-associated protein 18 homolog from Caenorhabditis elegans.